The primary structure comprises 134 residues: UPF0412 protein YaaI (134 aa).

An N-terminal signal peptide occupies residues M1–A23.

Belongs to the UPF0412 family.

In Escherichia coli (strain K12), this protein is UPF0412 protein YaaI.